Here is a 264-residue protein sequence, read N- to C-terminus: Small ribosomal subunit protein eS4 (264 aa).

Positions 42-104 (LPLVIIMRNR…TNENFRLLYD (63 aa)) constitute an S4 RNA-binding domain.

This sequence belongs to the eukaryotic ribosomal protein eS4 family.

It localises to the cytoplasm. The sequence is that of Small ribosomal subunit protein eS4 (RPS4) from Solanum tuberosum (Potato).